We begin with the raw amino-acid sequence, 356 residues long: 5-formaminoimidazole-4-carboxamide-1-(beta)-D-ribofuranosyl 5'-monophosphate synthetase (356 aa).

Residues His27 and Ser94 each contribute to the 5-amino-1-(5-phospho-beta-D-ribosyl)imidazole-4-carboxamide site. Residues 101–333 enclose the ATP-grasp domain; the sequence is TENFAELTVP…YADLIQEDLS (233 aa). Residues 145–196 and Glu226 contribute to the ATP site; that span reads PRDI…TRYY. 5-amino-1-(5-phospho-beta-D-ribosyl)imidazole-4-carboxamide is bound at residue Asn255. 2 residues coordinate Mg(2+): Glu293 and Glu306.

It belongs to the phosphohexose mutase family. The cofactor is Mg(2+). Mn(2+) serves as cofactor.

It catalyses the reaction 5-amino-1-(5-phospho-beta-D-ribosyl)imidazole-4-carboxamide + formate + ATP = 5-formamido-1-(5-phospho-D-ribosyl)imidazole-4-carboxamide + ADP + phosphate. Its pathway is purine metabolism; IMP biosynthesis via de novo pathway; 5-formamido-1-(5-phospho-D-ribosyl)imidazole-4-carboxamide from 5-amino-1-(5-phospho-D-ribosyl)imidazole-4-carboxamide (formate route): step 1/1. In terms of biological role, catalyzes the ATP- and formate-dependent formylation of 5-aminoimidazole-4-carboxamide-1-beta-d-ribofuranosyl 5'-monophosphate (AICAR) to 5-formaminoimidazole-4-carboxamide-1-beta-d-ribofuranosyl 5'-monophosphate (FAICAR) in the absence of folates. The sequence is that of 5-formaminoimidazole-4-carboxamide-1-(beta)-D-ribofuranosyl 5'-monophosphate synthetase from Methanosarcina acetivorans (strain ATCC 35395 / DSM 2834 / JCM 12185 / C2A).